The following is a 376-amino-acid chain: Cell adhesion molecule CEACAM18 (376 aa).

The signal sequence occupies residues 1 to 30 (MDFSRPSFSPWRWLTLVASLLTCGICQASG). Topologically, residues 31–330 (QIFISPDSLL…PLPTVNRELY (300 aa)) are extracellular. N-linked (GlcNAc...) asparagine glycosylation is found at N69, N95, and N110. Residues 229–314 (PDYVSLWTQP…TQLTFYRDVT (86 aa)) form the Ig-like C2-type domain. Residues C257 and C298 are joined by a disulfide bond. The helical transmembrane segment at 331–351 (IPGPLVIFLILLTSLGGAFVC) threads the bilayer. Residues 352 to 376 (RVLVYSLFQSCSRGKTCHKCPWQTN) are Cytoplasmic-facing.

The protein belongs to the immunoglobulin superfamily. CEA family. Mostly expressed in the small and large intestine and at lower levels also in other organs.

It localises to the membrane. The sequence is that of Cell adhesion molecule CEACAM18 from Mus musculus (Mouse).